Consider the following 174-residue polypeptide: UPF0398 protein llmg_0513 (174 aa).

Belongs to the UPF0398 family.

This is UPF0398 protein llmg_0513 from Lactococcus lactis subsp. cremoris (strain MG1363).